The primary structure comprises 209 residues: N-(5'-phosphoribosyl)anthranilate isomerase (209 aa).

It belongs to the TrpF family.

It carries out the reaction N-(5-phospho-beta-D-ribosyl)anthranilate = 1-(2-carboxyphenylamino)-1-deoxy-D-ribulose 5-phosphate. The protein operates within amino-acid biosynthesis; L-tryptophan biosynthesis; L-tryptophan from chorismate: step 3/5. This Staphylococcus carnosus (strain TM300) protein is N-(5'-phosphoribosyl)anthranilate isomerase.